A 125-amino-acid chain; its full sequence is Aldolase FrzH (125 aa).

It carries out the reaction (2S)-3-(4-methoxyphenyl)-2-[(3S)-3-(methylamino)-8-oxo-1-azaspiro[4.5]decan-1-yl]propanal = (1S,3S,6S,7S,8R)-7-hydroxy-6-[(4-methoxyphenyl)methyl]-3-(methylamino)-5-azatricyclo[6.3.1.0(1,5)]dodecan-9-one. Its pathway is secondary metabolite biosynthesis. Functionally, aldolase; part of the gene cluster that mediates the biosynthesis of the alkaloid (-)-FR901483, a potent immunosuppressant that shows efficacy in animal models and a probable inhibitor of purine nucleotide biosynthesis by targeting phosphoribosylpyrophosphate amidotransferase (PPAT). Within the pathway, FrzH is a new kind of aldolase with no similarities to known aldolases, and which catalyzes the intramolecular aldol condensation via formation of a C9-C3' bond to yield an aza-tricyclic product. The biosynthesis of (-)-FR901483 starts with the condensation of two L-tyrosines to yield (S,S)-dityrosyl-piperazine. This process occurs in 3 steps with the non-canonical nonribosomal peptide synthetase FrzA catalyzing the reduction of L-tyrosine into L-tyrosinal, the spontaneous condensation of 2 L-tyrosinal units, and the subsequent reduction by the NmrA-like family domain-containing oxidoreductase FrzB. The cytochrome P450 monooxygenase FrzC then performs coupling between N10 and C1' to morph the piperazine into a 1,4-diazabicyclo[3.2.1]octane spiro-fused to a 2,5-cyclohexadienone. The dienone portion is further reduced to cyclohexanone by the flavin-dependent reductase FrzD. The methyltranserases (MTs) FrzE and FrzF are then involved in the methylation at the C10' amine and the C4 phenolic oxygen, respectively. The order of the two MTs appear to be interchangeable. Cleavage of the C9-N10' bond by the dioxygenase FrzG then leads to formation of a conjugated iminium. In addition to the oxidation of C9, an additional dehydrogenation between C7 and C8 can occur to give a likely shunt product. The next biosynthetic step is the intramolecular aldol condensation catalyzed by the newly identified aldolase FrzH to yield an aza-tricyclic product with the formation of a C9-C3' bond. The short-chain dehydrogenase/reductase FrzI then produces dephospho-(-)-FR901483 that is phosphorylated at C4'-OH into (-)-FR901483 by the phosphotransferase FrzJ. The polypeptide is Aldolase FrzH (Cladobotryum sp).